Here is a 158-residue protein sequence, read N- to C-terminus: MQGRLSAWLVKHGLVHRSLGFDYQGIETLQIKPEDWHSIAVILYVYGYNYLRSQCAYDVAPGGLLASVYHLTRIEYGVDQPEEVCIKVFAPRRNPRIPSVFWVWKSADFQERESYDMFGISYDNHPRLKRILMPESWIGWPLRKDYIVPNFYEIQDAY.

The protein belongs to the complex I 30 kDa subunit family. As to quaternary structure, NDH is composed of at least 16 different subunits, 5 of which are encoded in the nucleus.

Its subcellular location is the plastid. The protein resides in the chloroplast thylakoid membrane. It carries out the reaction a plastoquinone + NADH + (n+1) H(+)(in) = a plastoquinol + NAD(+) + n H(+)(out). The enzyme catalyses a plastoquinone + NADPH + (n+1) H(+)(in) = a plastoquinol + NADP(+) + n H(+)(out). Its function is as follows. NDH shuttles electrons from NAD(P)H:plastoquinone, via FMN and iron-sulfur (Fe-S) centers, to quinones in the photosynthetic chain and possibly in a chloroplast respiratory chain. The immediate electron acceptor for the enzyme in this species is believed to be plastoquinone. Couples the redox reaction to proton translocation, and thus conserves the redox energy in a proton gradient. This Spinacia oleracea (Spinach) protein is NAD(P)H-quinone oxidoreductase subunit J, chloroplastic.